Consider the following 778-residue polypeptide: Endonuclease MutS2 (778 aa).

328-335 (GPNTGGKT) serves as a coordination point for ATP. Residues 702 to 777 (LDLRGKRYEE…GSGATIVTFK (76 aa)) form the Smr domain.

Belongs to the DNA mismatch repair MutS family. MutS2 subfamily. As to quaternary structure, homodimer. Binds to stalled ribosomes, contacting rRNA.

Endonuclease that is involved in the suppression of homologous recombination and thus may have a key role in the control of bacterial genetic diversity. In terms of biological role, acts as a ribosome collision sensor, splitting the ribosome into its 2 subunits. Detects stalled/collided 70S ribosomes which it binds and splits by an ATP-hydrolysis driven conformational change. Acts upstream of the ribosome quality control system (RQC), a ribosome-associated complex that mediates the extraction of incompletely synthesized nascent chains from stalled ribosomes and their subsequent degradation. Probably generates substrates for RQC. This Streptococcus pneumoniae serotype 2 (strain D39 / NCTC 7466) protein is Endonuclease MutS2.